Consider the following 314-residue polypeptide: Beta-ketoacyl-[acyl-carrier-protein] synthase III (314 aa).

Active-site residues include C112 and H241. The interval 242–246 (QANIR) is ACP-binding. Residue N271 is part of the active site.

It belongs to the thiolase-like superfamily. FabH family. In terms of assembly, homodimer.

The protein resides in the cytoplasm. It carries out the reaction malonyl-[ACP] + acetyl-CoA + H(+) = 3-oxobutanoyl-[ACP] + CO2 + CoA. It participates in lipid metabolism; fatty acid biosynthesis. Catalyzes the condensation reaction of fatty acid synthesis by the addition to an acyl acceptor of two carbons from malonyl-ACP. Catalyzes the first condensation reaction which initiates fatty acid synthesis and may therefore play a role in governing the total rate of fatty acid production. Possesses both acetoacetyl-ACP synthase and acetyl transacylase activities. Its substrate specificity determines the biosynthesis of branched-chain and/or straight-chain of fatty acids. This chain is Beta-ketoacyl-[acyl-carrier-protein] synthase III, found in Vesicomyosocius okutanii subsp. Calyptogena okutanii (strain HA).